The chain runs to 411 residues: Citrate synthase (411 aa).

Catalysis depends on residues histidine 304 and aspartate 363.

Belongs to the citrate synthase family.

The enzyme catalyses oxaloacetate + acetyl-CoA + H2O = citrate + CoA + H(+). It participates in carbohydrate metabolism; tricarboxylic acid cycle; isocitrate from oxaloacetate: step 1/2. The chain is Citrate synthase (gltA) from Rickettsia parkeri.